Here is a 141-residue protein sequence, read N- to C-terminus: Hemoglobin subunit alpha-D (141 aa).

Positions 1–141 constitute a Globin domain; sequence MLTAEDKKLI…VAAVLAEKYR (141 aa). Heme b-binding residues include His-58 and His-87.

Belongs to the globin family. As to quaternary structure, heterotetramer of two alpha-D chains and two beta chains. As to expression, red blood cells.

Functionally, involved in oxygen transport from the lung to the various peripheral tissues. In Anas platyrhynchos (Mallard), this protein is Hemoglobin subunit alpha-D (HBAD).